Here is a 384-residue protein sequence, read N- to C-terminus: tRNA-specific 2-thiouridylase MnmA (384 aa).

ATP is bound by residues Gly21–Ser28 and Met47. The tract at residues Asn107 to Asp109 is interaction with target base in tRNA. Cys112 (nucleophile) is an active-site residue. Residues Cys112 and Cys208 are joined by a disulfide bond. Residue Gly136 participates in ATP binding. Residues Lys158–Gln160 are interaction with tRNA. Cys208 serves as the catalytic Cysteine persulfide intermediate. Residues Arg320 to Tyr321 are interaction with tRNA.

This sequence belongs to the MnmA/TRMU family.

The protein resides in the cytoplasm. It carries out the reaction S-sulfanyl-L-cysteinyl-[protein] + uridine(34) in tRNA + AH2 + ATP = 2-thiouridine(34) in tRNA + L-cysteinyl-[protein] + A + AMP + diphosphate + H(+). Its function is as follows. Catalyzes the 2-thiolation of uridine at the wobble position (U34) of tRNA, leading to the formation of s(2)U34. The protein is tRNA-specific 2-thiouridylase MnmA of Chromohalobacter salexigens (strain ATCC BAA-138 / DSM 3043 / CIP 106854 / NCIMB 13768 / 1H11).